The chain runs to 389 residues: Mannuronan synthase (389 aa).

The PilZ domain occupies 16-116; sequence QRQFARVKLP…EVAALRYLIT (101 aa).

This sequence belongs to the Alg44 family.

The protein localises to the periplasm. The catalysed reaction is [(1-&gt;4)-beta-D-mannuronosyl](n) + GDP-alpha-D-mannuronate = [(1-&gt;4)-beta-D-mannuronosyl](n+1) + GDP + H(+). Its pathway is glycan biosynthesis; alginate biosynthesis. Required for alginate biosynthesis. The protein is Mannuronan synthase (alg44) of Pseudomonas aeruginosa (strain ATCC 15692 / DSM 22644 / CIP 104116 / JCM 14847 / LMG 12228 / 1C / PRS 101 / PAO1).